A 179-amino-acid polypeptide reads, in one-letter code: Cell division protein SepF (179 aa).

Residues 19 to 55 (DSSLPYEKRDEPVFTSVNSSQEPALPMNQPSQSAGAK) form a disordered region. A compositionally biased stretch (polar residues) spans 33 to 55 (TSVNSSQEPALPMNQPSQSAGAK).

It belongs to the SepF family. Homodimer. Interacts with FtsZ.

The protein resides in the cytoplasm. In terms of biological role, cell division protein that is part of the divisome complex and is recruited early to the Z-ring. Probably stimulates Z-ring formation, perhaps through the cross-linking of FtsZ protofilaments. Its function overlaps with FtsA. This chain is Cell division protein SepF, found in Streptococcus pneumoniae (strain JJA).